The chain runs to 508 residues: Bifunctional purine biosynthesis protein PurH (508 aa).

Positions 1–145 (MAKKALISVS…KNYKYVTILV (145 aa)) constitute an MGS-like domain.

This sequence belongs to the PurH family.

The enzyme catalyses (6R)-10-formyltetrahydrofolate + 5-amino-1-(5-phospho-beta-D-ribosyl)imidazole-4-carboxamide = 5-formamido-1-(5-phospho-D-ribosyl)imidazole-4-carboxamide + (6S)-5,6,7,8-tetrahydrofolate. It carries out the reaction IMP + H2O = 5-formamido-1-(5-phospho-D-ribosyl)imidazole-4-carboxamide. Its pathway is purine metabolism; IMP biosynthesis via de novo pathway; 5-formamido-1-(5-phospho-D-ribosyl)imidazole-4-carboxamide from 5-amino-1-(5-phospho-D-ribosyl)imidazole-4-carboxamide (10-formyl THF route): step 1/1. It participates in purine metabolism; IMP biosynthesis via de novo pathway; IMP from 5-formamido-1-(5-phospho-D-ribosyl)imidazole-4-carboxamide: step 1/1. In Thermoanaerobacter sp. (strain X514), this protein is Bifunctional purine biosynthesis protein PurH.